The sequence spans 833 residues: MEEIPVKVAKLEANGSETRGKMGNRGGLRGTFRIVEPNLQPADITEKTGNIGRTVKLQSNFTKFSVLRSEKFMMYDSVFSQVGLSPKVKLQFIVRVCQENKLPGAFCFDGRRLFTSEKWHGESDIQEFSHDEKKMTLRLVSTILPETEEYYQMINVLLNNLQVMLGQERIGKGYFLSPNITKDEVPRNSGPTFFETNSFKVLGGFGTTLQRGTKPTGELTTLLYIERINRVLNDNSVMKAYNRRSIDQLIGRDIITKYNNKTYRISEIKEMNVDEKFEMGGRTLSYAEYFKERYNIRLTQGDQPFVLTRVKKPMRRERKKKDEEGVEKEKEKEAPEEKDMTLNIPGELCFLCGFSDQEKSNMDLQKNLGCVLKREPRERLDDIPAYCNWIKNSDAATGMCNKWQLKIDNKPLEIEGRELPPCDVISGGSKINEKMGDDWKFGRVQFDIKRDRKHEIDVVIVDRNDFQYKNFMNDVEQELRNMRIDARVGKVNTCGPNDVERCLNDAARSGSGCAKMALVFVPDDRVYAKVKSFTMSTGLLTQCVTTRNGTNRNDKRRKVVSSKTVMQIFAKFGYDPWTVEIKLRPTMIVGMDTYHNKSSKKSIQASVFSINSTFTQYMSFVVNSPKGRQEFHETLGKNFNLALEDFKKRYDILPQRILVFRDGVGDNQLQFTKNFEVDAMKPLIENIYKGNGFPVPQIIYVIVKKRVGTKLFNRGNNPNPGTVVDKEIVKPNFYEFFLVSQRTTKGTATPTNYNVLEDTRLLTKKGTMDPMAPNELQKITYALTHLYFNWMGTIRVPVPVHYAHRLAELVGKVHKGSNPVAINERIRNRLFYL.

The region spanning 227–353 (RINRVLNDNS…IPGELCFLCG (127 aa)) is the PAZ domain. Residues 313 to 338 (PMRRERKKKDEEGVEKEKEKEAPEEK) form a disordered region. Positions 320–338 (KKDEEGVEKEKEKEAPEEK) are enriched in basic and acidic residues. Residues 515-815 (KMALVFVPDD…LAELVGKVHK (301 aa)) enclose the Piwi domain.

The protein belongs to the argonaute family. Piwi subfamily. As to expression, expressed in dividing adult stem cells.

In terms of biological role, required for the production of functional progeny from adult somatic stem cells (neoblasts). The chain is Piwi-like protein 2 (wi-2) from Schmidtea mediterranea (Freshwater planarian flatworm).